Consider the following 126-residue polypeptide: MIPGEILTGDDPVEINAGRPVRTVLVRNMGDRPVQVGSHYHFAAANPALDFDRASAWGHRLAVPAGTAVRFEPGVEREIELVPLAGARVVPGLRPESAGPLDAASGTRIADTATIEDISGFQGEGS.

The protein belongs to the urease beta subunit family. As to quaternary structure, heterotrimer of UreA (gamma), UreB (beta) and UreC (alpha) subunits. Three heterotrimers associate to form the active enzyme.

Its subcellular location is the cytoplasm. The enzyme catalyses urea + 2 H2O + H(+) = hydrogencarbonate + 2 NH4(+). Its pathway is nitrogen metabolism; urea degradation; CO(2) and NH(3) from urea (urease route): step 1/1. The chain is Urease subunit beta from Frankia casuarinae (strain DSM 45818 / CECT 9043 / HFP020203 / CcI3).